Consider the following 647-residue polypeptide: MMDSGNNNMNRAKRNLDGNDDDQPERKRPAFASVIVEALKVDSLQKLCSSLEPILRRVVSEELERALAKLGPARLTGSSGSSPKRIEGPDGRKLQLHFKSRLSLPLFTGGKVEGEQGAVIHVVLIDANTGRAVVYGPEASAKLHIVVLEGDFNTEDDEDWTQEEFESHVVKERSGKRPLLTGEVYVTLKEGVGTLGELVFTDNSSWIRSRKFRLGLRVVSGCCDGMRIREAKTEAFVVKDHRGELYKKHYPPALNDDVWRLDKIGKDGAFHKKLTAEGINTVEDFLRVMVKDSPKLRTILGSGMSNKMWDALVEHAKTCVQSSKLYIYYAEDSRNVGVVFNNIYELSGLISGDQYFSADSLTDSQKVYVEGLVKKAYENWNLVIEYDGKSLLDLKQPQRLSITHTNLENYSTAAIDHPMQMVAGHSSSMPPNQSPVLSDFAIGGYDQTLATRYHSHPQLLNSNPRAQFEVASCSTSQDQFMGNLHQTQSTINNQHMNGLALGPSQSSTSGYQNINPSSVHQADLNHLEDWSNPRERGPDDFFSEEEIRLRSHEMLESEDMQQFLRLFSMGGGGNGSATHLPEDGYTFPSFLHTPMQGYDEDRGRSGRAVVGWLKIKAAMRWGFFIRRKAAERRAQIVELDDDDEDGE.

A compositionally biased stretch (polar residues) spans 1-10 (MMDSGNNNMN). Positions 1-26 (MMDSGNNNMNRAKRNLDGNDDDQPER) are disordered. Positions 8–85 (NMNRAKRNLD…TGSSGSSPKR (78 aa)) are calmodulin-binding. The short motif at 12-19 (AKRNLDGN) is the Nuclear localization signal element. The interval 155–278 (EDDEDWTQEE…AFHKKLTAEG (124 aa)) is DNA-binding.

The protein belongs to the plant ACBP60 protein family. In terms of assembly, interacts with calmodulin (CaM). As to expression, expressed in leaves, stems, flowers, developing seeds and root.

The protein localises to the nucleus. Transcription activator that binds DNA in a sequence-specific manner, likely 5'-GAAATTTTGG-3', to promote the expression of target genes. This chain is Calmodulin-binding protein 60 B, found in Arabidopsis thaliana (Mouse-ear cress).